The primary structure comprises 422 residues: Protein FAM53B (422 aa).

Phosphoserine occurs at positions 118, 167, 169, 179, 212, and 268. The segment covering 245 to 268 has biased composition (low complexity); the sequence is SANSTPASTPELARRSSGLSRSRS. A disordered region spans residues 245 to 269; sequence SANSTPASTPELARRSSGLSRSRSQ. The short motif at 281-284 is the Nuclear localization signal element; it reads KRRR.

Belongs to the FAM53 family. Interacts with CTNNB1. In terms of tissue distribution, detected in skeletal muscle, kidney, spleen, thyroid, testis, ovary, small intestine, colon and peripheral blood.

It is found in the nucleus. Its function is as follows. Acts as a regulator of Wnt signaling pathway by regulating beta-catenin (CTNNB1) nuclear localization. This is Protein FAM53B from Homo sapiens (Human).